Consider the following 360-residue polypeptide: 3-dehydroquinate synthase (360 aa).

NAD(+)-binding positions include 71–76 (DGEAHK), 105–109 (GVVGD), 129–130 (TT), Lys-142, and Lys-151. Positions 184, 247, and 264 each coordinate Zn(2+).

It belongs to the sugar phosphate cyclases superfamily. Dehydroquinate synthase family. Co(2+) is required as a cofactor. It depends on Zn(2+) as a cofactor. Requires NAD(+) as cofactor.

It localises to the cytoplasm. It catalyses the reaction 7-phospho-2-dehydro-3-deoxy-D-arabino-heptonate = 3-dehydroquinate + phosphate. Its pathway is metabolic intermediate biosynthesis; chorismate biosynthesis; chorismate from D-erythrose 4-phosphate and phosphoenolpyruvate: step 2/7. Its function is as follows. Catalyzes the conversion of 3-deoxy-D-arabino-heptulosonate 7-phosphate (DAHP) to dehydroquinate (DHQ). The polypeptide is 3-dehydroquinate synthase (Azoarcus sp. (strain BH72)).